The sequence spans 462 residues: CD-NTase-associated protein 4 (462 aa).

The N-terminal endonuclease domain stretch occupies residues 1-226; it reads MSASLLEKQS…FENFICHALE (226 aa). Active-site residues include Asp-50, Glu-67, and Lys-69. Asp-50 is a Mg(2+) binding site. The interval 235 to 462 is C-terminal SAVED domain; that stretch reads DPIKINLSAS…QYIPTAELNL (228 aa). Residues 299 to 301, Trp-449, and Tyr-454 contribute to the 2',3',3'-c-tri-AMP site; that span reads KQR.

This sequence belongs to the Cap4 nuclease family. As to quaternary structure, a monomer in the absence of ligand, in its presence it forms oligomers. A divalent metal cation is required as a cofactor.

With respect to regulation, DNase activity is activated upon ligand binding. Inhibited by EDTA. Functionally, effector DNase of a CBASS antivirus system. CBASS (cyclic oligonucleotide-based antiphage signaling system) provides immunity against bacteriophage. The CD-NTase protein synthesizes cyclic nucleotides in response to infection; these serve as specific second messenger signals. The signals activate a diverse range of effectors, leading to bacterial cell death and thus abortive phage infection. A type II-C(AAAA) CBASS system. Binds cyclic nucleotide second messengers (synthesized by CdnD, the cognate CD-NTase in the CBASS operon). Ligand binding activates it to endonucleolytically degrade dsDNA to approximately 6 bp length fragments, with a preference for 5'-C or 5'-G cleavage site. The minor product of CdnD is the activating nucleotide; also binds the major product (2',3',3'-cyclic AMP-AMP-AMP) but is not activated by it. Only binds DNA in the presence of ligand. Is not activated by c-di-AMP, c-di-GMP, 3'3'-cyclic GMP-AMP (3'3'-cGAMP) or 3',3',3'-cyclic AMP-AMP-GMP. The polypeptide is CD-NTase-associated protein 4 (Acinetobacter sp. (strain ATCC 27244 / 9458)).